The following is a 692-amino-acid chain: Elongation factor G 2 (692 aa).

The 276-residue stretch at glutamate 8–leucine 283 folds into the tr-type G domain. GTP-binding positions include alanine 17–threonine 24, aspartate 81–histidine 85, and asparagine 135–aspartate 138.

Belongs to the TRAFAC class translation factor GTPase superfamily. Classic translation factor GTPase family. EF-G/EF-2 subfamily.

It localises to the cytoplasm. Its function is as follows. Catalyzes the GTP-dependent ribosomal translocation step during translation elongation. During this step, the ribosome changes from the pre-translocational (PRE) to the post-translocational (POST) state as the newly formed A-site-bound peptidyl-tRNA and P-site-bound deacylated tRNA move to the P and E sites, respectively. Catalyzes the coordinated movement of the two tRNA molecules, the mRNA and conformational changes in the ribosome. The chain is Elongation factor G 2 from Geobacter sulfurreducens (strain ATCC 51573 / DSM 12127 / PCA).